The sequence spans 365 residues: 4-hydroxy-3-methylbut-2-en-1-yl diphosphate synthase (flavodoxin) (365 aa).

4 residues coordinate [4Fe-4S] cluster: cysteine 265, cysteine 268, cysteine 300, and glutamate 307.

Belongs to the IspG family. The cofactor is [4Fe-4S] cluster.

It catalyses the reaction (2E)-4-hydroxy-3-methylbut-2-enyl diphosphate + oxidized [flavodoxin] + H2O + 2 H(+) = 2-C-methyl-D-erythritol 2,4-cyclic diphosphate + reduced [flavodoxin]. The protein operates within isoprenoid biosynthesis; isopentenyl diphosphate biosynthesis via DXP pathway; isopentenyl diphosphate from 1-deoxy-D-xylulose 5-phosphate: step 5/6. In terms of biological role, converts 2C-methyl-D-erythritol 2,4-cyclodiphosphate (ME-2,4cPP) into 1-hydroxy-2-methyl-2-(E)-butenyl 4-diphosphate. This chain is 4-hydroxy-3-methylbut-2-en-1-yl diphosphate synthase (flavodoxin), found in Bacillus mycoides (strain KBAB4) (Bacillus weihenstephanensis).